We begin with the raw amino-acid sequence, 396 residues long: Elongation factor Tu (396 aa).

The region spanning 10-205 (KPHVNIGTIG…ACDDNIPDPV (196 aa)) is the tr-type G domain. Positions 19 to 26 (GHVDHGKT) are G1. Position 19–26 (19–26 (GHVDHGKT)) interacts with GTP. Position 26 (threonine 26) interacts with Mg(2+). The tract at residues 62–66 (GITIN) is G2. A G3 region spans residues 83–86 (DAPG). GTP-binding positions include 83–87 (DAPGH) and 138–141 (NKCD). Residues 138-141 (NKCD) form a G4 region. A G5 region spans residues 175–177 (SAL).

This sequence belongs to the TRAFAC class translation factor GTPase superfamily. Classic translation factor GTPase family. EF-Tu/EF-1A subfamily. Monomer.

It localises to the cytoplasm. It catalyses the reaction GTP + H2O = GDP + phosphate + H(+). GTP hydrolase that promotes the GTP-dependent binding of aminoacyl-tRNA to the A-site of ribosomes during protein biosynthesis. This chain is Elongation factor Tu, found in Corynebacterium efficiens (strain DSM 44549 / YS-314 / AJ 12310 / JCM 11189 / NBRC 100395).